Consider the following 426-residue polypeptide: Glutamate-1-semialdehyde 2,1-aminomutase (426 aa).

N6-(pyridoxal phosphate)lysine is present on lysine 265.

The protein belongs to the class-III pyridoxal-phosphate-dependent aminotransferase family. HemL subfamily. Homodimer. Pyridoxal 5'-phosphate is required as a cofactor.

It is found in the cytoplasm. It carries out the reaction (S)-4-amino-5-oxopentanoate = 5-aminolevulinate. Its pathway is porphyrin-containing compound metabolism; protoporphyrin-IX biosynthesis; 5-aminolevulinate from L-glutamyl-tRNA(Glu): step 2/2. This Paraburkholderia phymatum (strain DSM 17167 / CIP 108236 / LMG 21445 / STM815) (Burkholderia phymatum) protein is Glutamate-1-semialdehyde 2,1-aminomutase.